The primary structure comprises 293 residues: Ribosomal RNA small subunit methyltransferase H (293 aa).

S-adenosyl-L-methionine is bound by residues 32–34, Asp51, Phe78, Asp99, and Gln106; that span reads GGH. Residues 271–293 are disordered; sequence PGTEEIRENPPSRSAKLRVAKRI.

This sequence belongs to the methyltransferase superfamily. RsmH family.

It is found in the cytoplasm. The enzyme catalyses cytidine(1402) in 16S rRNA + S-adenosyl-L-methionine = N(4)-methylcytidine(1402) in 16S rRNA + S-adenosyl-L-homocysteine + H(+). Functionally, specifically methylates the N4 position of cytidine in position 1402 (C1402) of 16S rRNA. This Persephonella marina (strain DSM 14350 / EX-H1) protein is Ribosomal RNA small subunit methyltransferase H.